The primary structure comprises 461 residues: ADP-specific phosphofructokinase (461 aa).

The 457-residue stretch at 1–457 (MVRELLEKAR…FTSYLAMLKE (457 aa)) folds into the ADPK domain. Residues Glu-268, Glu-298, and Asp-441 each coordinate Mg(2+). Asp-441 acts as the Proton acceptor in catalysis.

This sequence belongs to the carbohydrate kinase PfkC family. Mg(2+) is required as a cofactor.

It localises to the cytoplasm. The enzyme catalyses beta-D-fructose 6-phosphate + ADP = beta-D-fructose 1,6-bisphosphate + AMP + H(+). Its pathway is carbohydrate degradation; glycolysis. Its function is as follows. Catalyzes the phosphorylation of fructose 6-phosphate to fructose 1,6-bisphosphate using ADP as the phosphate donor. This is ADP-specific phosphofructokinase from Thermococcus kodakarensis (strain ATCC BAA-918 / JCM 12380 / KOD1) (Pyrococcus kodakaraensis (strain KOD1)).